A 324-amino-acid polypeptide reads, in one-letter code: Polycomb complex protein BMI-1 (324 aa).

Residues 18–57 (CVLCGGYFIDATTIIECLHSFCKTCIVRYLETSKYCPICD) form an RING-type zinc finger. The Nuclear localization signal signature appears at 81-95 (KLVPGLFKNEMKRRR). The tract at residues 160–180 (RYLRCPAAMTVMHLRKFLRSK) is interaction with PHC2. The segment at 162–226 (LRCPAAMTVM…GPLPLKYRVR (65 aa)) is interaction with E4F1. The disordered stretch occupies residues 232–324 (MKMSHQRDGL…LNGSSATSSG (93 aa)). A compositionally biased stretch (low complexity) spans 264–276 (PSTSSCLPSPSTP). Residues 277 to 307 (VQSPHPQFPHISSTMNGTSNSPSANHQSSFA) show a composition bias toward polar residues. Positions 313–324 (SSLNGSSATSSG) are enriched in low complexity.

As to quaternary structure, component of a PRC1-like complex. Identified in a PRC1-like HPRC-H complex with CBX2, CBX4, CBX8, PHC1, PHC2, PHC3, RING1 and RNF2. Interacts with RNF2/RING2. Interacts with RING1. Part of a complex that contains RNF2, UB2D3 and BMI1, where RNF2 and BMI1 form a tight heterodimer, and UB2D3 interacts only with RNF2. The complex composed of RNF2, UB2D3 and BMI1 binds nucleosomes, and has activity only with nucleosomal histone H2A. Interacts with CBX7 and CBX8. Interacts with SPOP. Part of a complex consisting of BMI1, CUL3 and SPOP. Interacts with E4F1. Interacts with PHC2. Interacts with zinc finger protein ZNF277. May be part of a complex including at least ZNF277, BMI1 and RNF2/RING2. May be polyubiquitinated; which does not lead to proteasomal degradation. Monoubiquitinated. As to expression, detected in most organs with high expression levels in thymus, heart, brain and testis.

It is found in the nucleus. The protein localises to the cytoplasm. In terms of biological role, component of a Polycomb group (PcG) multiprotein PRC1-like complex, a complex class required to maintain the transcriptionally repressive state of many genes, including Hox genes, throughout development. PcG PRC1 complex acts via chromatin remodeling and modification of histones; it mediates monoubiquitination of histone H2A 'Lys-119', rendering chromatin heritably changed in its expressibility. The complex composed of RNF2, UB2D3 and BMI1 binds nucleosomes, and has activity only with nucleosomal histone H2A. In the PRC1-like complex, regulates the E3 ubiquitin-protein ligase activity of RNF2/RING2. The chain is Polycomb complex protein BMI-1 (Bmi1) from Mus musculus (Mouse).